The sequence spans 255 residues: Ribosomal RNA small subunit methyltransferase A (255 aa).

Residues N12, L14, G39, E60, D84, and N102 each contribute to the S-adenosyl-L-methionine site.

This sequence belongs to the class I-like SAM-binding methyltransferase superfamily. rRNA adenine N(6)-methyltransferase family. RsmA subfamily.

The protein resides in the cytoplasm. The enzyme catalyses adenosine(1518)/adenosine(1519) in 16S rRNA + 4 S-adenosyl-L-methionine = N(6)-dimethyladenosine(1518)/N(6)-dimethyladenosine(1519) in 16S rRNA + 4 S-adenosyl-L-homocysteine + 4 H(+). Functionally, specifically dimethylates two adjacent adenosines (A1518 and A1519) in the loop of a conserved hairpin near the 3'-end of 16S rRNA in the 30S particle. May play a critical role in biogenesis of 30S subunits. The polypeptide is Ribosomal RNA small subunit methyltransferase A (Methylobacillus flagellatus (strain ATCC 51484 / DSM 6875 / VKM B-1610 / KT)).